The sequence spans 245 residues: 14-3-3 protein zeta (245 aa).

Belongs to the 14-3-3 family. In terms of assembly, homodimer. As to expression, present in all adult tissues examined with the highest levels in the brain.

The protein localises to the cytoplasm. In terms of biological role, adapter protein implicated in the regulation of a large spectrum of both general and specialized signaling pathways. Binds to a large number of partners, usually by recognition of a phosphoserine or phosphothreonine motif. Binding generally results in the modulation of the activity of the binding partner. The sequence is that of 14-3-3 protein zeta (ywhaz) from Xenopus laevis (African clawed frog).